The chain runs to 92 residues: MARSVWKGPFVDGYLLTKAEKVREGGRNEVIKMWSRRSTILPQFVGLTFGVYNGNKHVPVSISEEMVGHKFGEFAPTRTYYGHGADKKSKRK.

Belongs to the universal ribosomal protein uS19 family.

Functionally, protein S19 forms a complex with S13 that binds strongly to the 16S ribosomal RNA. The chain is Small ribosomal subunit protein uS19 from Brucella anthropi (strain ATCC 49188 / DSM 6882 / CCUG 24695 / JCM 21032 / LMG 3331 / NBRC 15819 / NCTC 12168 / Alc 37) (Ochrobactrum anthropi).